A 189-amino-acid chain; its full sequence is Holliday junction branch migration complex subunit RuvA (189 aa).

The interval 1–63 (MIHALNGKVE…DDGISLYGFL (63 aa)) is domain I. Positions 64 to 135 (EVIKLKLFEK…ELKDTIKELD (72 aa)) are domain II. The flexible linker stretch occupies residues 135-139 (DVSIN). The tract at residues 140–189 (EKDRKVLEAIEALVTLGFNRNQAKKAVNKVAAKDDKLDDIIKKALRFLSR) is domain III.

The protein belongs to the RuvA family. In terms of assembly, homotetramer. Forms an RuvA(8)-RuvB(12)-Holliday junction (HJ) complex. HJ DNA is sandwiched between 2 RuvA tetramers; dsDNA enters through RuvA and exits via RuvB. An RuvB hexamer assembles on each DNA strand where it exits the tetramer. Each RuvB hexamer is contacted by two RuvA subunits (via domain III) on 2 adjacent RuvB subunits; this complex drives branch migration. In the full resolvosome a probable DNA-RuvA(4)-RuvB(12)-RuvC(2) complex forms which resolves the HJ.

It localises to the cytoplasm. In terms of biological role, the RuvA-RuvB-RuvC complex processes Holliday junction (HJ) DNA during genetic recombination and DNA repair, while the RuvA-RuvB complex plays an important role in the rescue of blocked DNA replication forks via replication fork reversal (RFR). RuvA specifically binds to HJ cruciform DNA, conferring on it an open structure. The RuvB hexamer acts as an ATP-dependent pump, pulling dsDNA into and through the RuvAB complex. HJ branch migration allows RuvC to scan DNA until it finds its consensus sequence, where it cleaves and resolves the cruciform DNA. This Thermosipho africanus (strain TCF52B) protein is Holliday junction branch migration complex subunit RuvA.